We begin with the raw amino-acid sequence, 323 residues long: Methionyl-tRNA formyltransferase (323 aa).

Residue 115–118 (SLLP) participates in (6S)-5,6,7,8-tetrahydrofolate binding.

Belongs to the Fmt family.

It catalyses the reaction L-methionyl-tRNA(fMet) + (6R)-10-formyltetrahydrofolate = N-formyl-L-methionyl-tRNA(fMet) + (6S)-5,6,7,8-tetrahydrofolate + H(+). Attaches a formyl group to the free amino group of methionyl-tRNA(fMet). The formyl group appears to play a dual role in the initiator identity of N-formylmethionyl-tRNA by promoting its recognition by IF2 and preventing the misappropriation of this tRNA by the elongation apparatus. The sequence is that of Methionyl-tRNA formyltransferase from Lactococcus lactis subsp. cremoris (strain SK11).